The primary structure comprises 284 residues: MDAIKKKMQMLKLDKENALDRAEQAEADKKAAEDRSKQLEDELVSLQKKLKGTEDELDKYSEALKDAQEKLELAEKKATDAEADVASLNRRIQLVEEELDRAQERLATALQKLEEAEKAADESERGMKVIESRAQKDEEKMEIQEIQLKEAKHIAEDADRKYEEVARKLVIIESDLERAEERAELSEGKCAELEEELKTVTNNLKSLEAQAEKYSQKEDRYEEEIKVLSDKLKEAETRAEFAERSVTKLEKSIDDLEDELYAQKLKYKAISEELDHALNDMTSI.

Position 1 is an N-acetylmethionine (methionine 1). The tract at residues 1–38 (MDAIKKKMQMLKLDKENALDRAEQAEADKKAAEDRSKQ) is disordered. Residues 1-284 (MDAIKKKMQM…DHALNDMTSI (284 aa)) adopt a coiled-coil conformation. Residues 12–38 (KLDKENALDRAEQAEADKKAAEDRSKQ) are compositionally biased toward basic and acidic residues. Residues alanine 31, serine 45, and lysine 51 each carry the phosphoserine modification. The tract at residues 116–136 (AEKAADESERGMKVIESRAQK) is disordered. Phosphoserine occurs at positions 174, 186, and 206. At lysine 213 the chain carries N6-acetyllysine. A Phosphoserine modification is found at serine 252. Residue tyrosine 261 is modified to Phosphotyrosine. Position 271 is a phosphoserine (serine 271). The residue at position 283 (serine 283) is a Phosphoserine; by DAPK1.

The protein belongs to the tropomyosin family. As to quaternary structure, homodimer. Heterodimer of an alpha (TPM1, TPM3 or TPM4) and a beta (TPM2) chain. Interacts with HRG (via the HRR domain); the interaction contributes to the antiangiogenic properties of the histidine/proline-rich region (HRR) of HRG. Interacts (via N-terminus) with LMOD2 (via N-terminus) and TMOD1 (via N-terminus). Post-translationally, phosphorylated at Ser-283 by DAPK1 in response to oxidative stress and this phosphorylation enhances stress fiber formation in endothelial cells. In terms of tissue distribution, detected in primary breast cancer tissues but undetectable in normal breast tissues in Sudanese patients. Isoform 1 is expressed in adult and fetal skeletal muscle and cardiac tissues, with higher expression levels in the cardiac tissues. Isoform 10 is expressed in adult and fetal cardiac tissues, but not in skeletal muscle.

Its subcellular location is the cytoplasm. It is found in the cytoskeleton. In terms of biological role, binds to actin filaments in muscle and non-muscle cells. Plays a central role, in association with the troponin complex, in the calcium dependent regulation of vertebrate striated muscle contraction. Smooth muscle contraction is regulated by interaction with caldesmon. In non-muscle cells is implicated in stabilizing cytoskeleton actin filaments. The protein is Tropomyosin alpha-1 chain (TPM1) of Homo sapiens (Human).